Consider the following 178-residue polypeptide: CCHC-type zinc finger nucleic acid binding protein (178 aa).

Ser2 carries the post-translational modification N-acetylserine. The segment at 4 to 21 adopts a CCHC-type 1 zinc-finger fold; it reads NECFKCGRSGHWARECPT. Residue Lys8 is modified to N6-acetyllysine. Residues Arg25 and Arg27 each carry the omega-N-methylarginine; by PRMT1 modification. The tract at residues 25–38 is RNA-binding Arg/Gly-rich region (RGG-box); sequence RGRGMRSRGRGGFT. Omega-N-methylarginine is present on residues Arg32 and Arg34. Phosphoserine is present on Ser49. CCHC-type zinc fingers lie at residues 52–69, 72–90, 97–114, 118–135, 136–153, and 157–174; these read DICY…DCDL, DEAC…DCKE, QCCY…DCDH, QKCY…DCTK, VKCY…NCSK, and VNCY…ECTI. Omega-N-methylarginine occurs at positions 72, 79, and 80.

Associates with the 40S ribosomal subunit, the 80S ribosome and with polysomes. Arginine methylation by PRMT1 in the Arg/Gly-rich region impedes RNA binding.

Its subcellular location is the nucleus. The protein localises to the cytoplasm. The protein resides in the endoplasmic reticulum. In terms of biological role, single-stranded DNA-binding protein that preferentially binds to the sterol regulatory element (SRE) sequence 5'-GTGCGGTG-3', and thereby mediates transcriptional repression. Has a role as transactivator of the Myc promoter. Binds single-stranded RNA in a sequence-specific manner. Binds G-rich elements in target mRNA coding sequences. Prevents G-quadruplex structure formation in vitro, suggesting a role in supporting translation by resolving stable structures on mRNAs. This Mus musculus (Mouse) protein is CCHC-type zinc finger nucleic acid binding protein.